The sequence spans 370 residues: 3-dehydroquinate synthase (370 aa).

Residues 112-116, 136-137, Lys149, Lys158, and 176-179 contribute to the NAD(+) site; these read GVIGD, TT, and TLKT. Zn(2+) is bound by residues Glu191, His256, and His273.

This sequence belongs to the sugar phosphate cyclases superfamily. Dehydroquinate synthase family. Co(2+) serves as cofactor. Zn(2+) is required as a cofactor. Requires NAD(+) as cofactor.

It is found in the cytoplasm. The enzyme catalyses 7-phospho-2-dehydro-3-deoxy-D-arabino-heptonate = 3-dehydroquinate + phosphate. The protein operates within metabolic intermediate biosynthesis; chorismate biosynthesis; chorismate from D-erythrose 4-phosphate and phosphoenolpyruvate: step 2/7. Functionally, catalyzes the conversion of 3-deoxy-D-arabino-heptulosonate 7-phosphate (DAHP) to dehydroquinate (DHQ). This chain is 3-dehydroquinate synthase, found in Prochlorococcus marinus (strain MIT 9211).